A 144-amino-acid polypeptide reads, in one-letter code: Universal stress protein A (144 aa).

This sequence belongs to the universal stress protein A family. Homodimer.

The protein resides in the cytoplasm. In terms of biological role, required for resistance to DNA-damaging agents. The sequence is that of Universal stress protein A (uspA) from Salmonella typhimurium (strain LT2 / SGSC1412 / ATCC 700720).